We begin with the raw amino-acid sequence, 152 residues long: Transcriptional regulator MraZ (152 aa).

SpoVT-AbrB domains follow at residues 5–52 (ATLV…PLPE) and 81–124 (ASEC…DETT).

It belongs to the MraZ family. As to quaternary structure, forms oligomers.

The protein resides in the cytoplasm. Its subcellular location is the nucleoid. Functionally, negatively regulates its own expression and that of the subsequent genes in the proximal part of the division and cell wall (dcw) gene cluster. Acts by binding directly to DNA. May also regulate the expression of genes outside the dcw cluster. The protein is Transcriptional regulator MraZ of Salmonella paratyphi A (strain ATCC 9150 / SARB42).